A 40-amino-acid polypeptide reads, in one-letter code: Submaxillary gland androgen-regulated protein 2, isoform epsilon (40 aa).

The first 20 residues, 1 to 20 (MKALYMVFVLWVLIGCFLRC), serve as a signal peptide directing secretion.

The protein localises to the secreted. Its function is as follows. May play a role in protection or detoxification. The polypeptide is Submaxillary gland androgen-regulated protein 2, isoform epsilon (Smr2) (Mus musculus (Mouse)).